The following is a 130-amino-acid chain: Small ribosomal subunit protein uS11 (130 aa).

This sequence belongs to the universal ribosomal protein uS11 family. Part of the 30S ribosomal subunit. Interacts with proteins S7 and S18. Binds to IF-3.

In terms of biological role, located on the platform of the 30S subunit, it bridges several disparate RNA helices of the 16S rRNA. Forms part of the Shine-Dalgarno cleft in the 70S ribosome. The polypeptide is Small ribosomal subunit protein uS11 (Acholeplasma laidlawii (strain PG-8A)).